The chain runs to 338 residues: RNA 3'-terminal phosphate cyclase (338 aa).

ATP-binding positions include glutamine 103 and 283 to 287 (YLADQ). Histidine 308 acts as the Tele-AMP-histidine intermediate in catalysis.

This sequence belongs to the RNA 3'-terminal cyclase family. Type 1 subfamily.

It is found in the cytoplasm. The catalysed reaction is a 3'-end 3'-phospho-ribonucleotide-RNA + ATP = a 3'-end 2',3'-cyclophospho-ribonucleotide-RNA + AMP + diphosphate. Functionally, catalyzes the conversion of 3'-phosphate to a 2',3'-cyclic phosphodiester at the end of RNA. The mechanism of action of the enzyme occurs in 3 steps: (A) adenylation of the enzyme by ATP; (B) transfer of adenylate to an RNA-N3'P to produce RNA-N3'PP5'A; (C) and attack of the adjacent 2'-hydroxyl on the 3'-phosphorus in the diester linkage to produce the cyclic end product. The biological role of this enzyme is unknown but it is likely to function in some aspects of cellular RNA processing. This Escherichia coli (strain K12 / MC4100 / BW2952) protein is RNA 3'-terminal phosphate cyclase.